The chain runs to 582 residues: Phosphoribosylaminoimidazole carboxylase (582 aa).

The region spanning 114–305 is the ATP-grasp domain; it reads KKYLAEKGVA…QFENHLRAIL (192 aa). 143–200 is an ATP binding site; sequence AGRLGLPLMLKAKTLAYDGRGNSPLKSTSSEDIQASLKFLGDRPLYAEGWAPFVKEVA.

It in the C-terminal section; belongs to the AIR carboxylase family. Class I subfamily.

The catalysed reaction is 5-amino-1-(5-phospho-D-ribosyl)imidazole-4-carboxylate + H(+) = 5-amino-1-(5-phospho-beta-D-ribosyl)imidazole + CO2. It functions in the pathway purine metabolism; IMP biosynthesis via de novo pathway; 5-amino-1-(5-phospho-D-ribosyl)imidazole-4-carboxylate from 5-amino-1-(5-phospho-D-ribosyl)imidazole (carboxylase route): step 1/1. The chain is Phosphoribosylaminoimidazole carboxylase (ADE2) from Cryptococcus neoformans var. grubii serotype A (strain H99 / ATCC 208821 / CBS 10515 / FGSC 9487) (Filobasidiella neoformans var. grubii).